Here is a 234-residue protein sequence, read N- to C-terminus: uncharacterized protein (234 aa).

Transmembrane regions (helical) follow at residues 22–42 (TFLN…IPLI), 59–79 (INWA…AYLI), 154–174 (FWIF…IFFC), and 186–206 (LLSL…IFAL).

Its subcellular location is the cell membrane. This is an uncharacterized protein from Escherichia coli (strain K12).